Reading from the N-terminus, the 218-residue chain is Nuclear import protein MOG1 (218 aa).

It belongs to the MOG1 family. Interacts with GSP1.

It is found in the nucleus. Functionally, involved in the Ran-GTPase system for nuclear protein import and poly(A)+ mRNA export. The chain is Nuclear import protein MOG1 (MOG1) from Saccharomyces cerevisiae (strain ATCC 204508 / S288c) (Baker's yeast).